The primary structure comprises 1049 residues: Probable ATP-dependent permease (1049 aa).

An N-terminal signal peptide occupies residues 1-25 (MGSHRRYLYYSILSFLLLSCSVVLA). Over 26–324 (KQDKTPFFEG…KDPTVSWQGK (299 aa)) the chain is Lumenal. Asparagine 50, asparagine 114, asparagine 165, and asparagine 221 each carry an N-linked (GlcNAc...) asparagine glycan. A helical membrane pass occupies residues 325-345 (LVLALTAVMVLALFTFATFYI). The Cytoplasmic segment spans residues 346–463 (SKSPLFRNGL…ISMDRKSFSK (118 aa)). The 248-residue stretch at 384–631 (LSFENITYSV…LRNEGYICPD (248 aa)) folds into the ABC transporter domain. 423–430 (GGSGAGKT) serves as a coordination point for ATP. A helical transmembrane segment spans residues 464–481 (IIGFVDQDDFLLPTLTVF). Over 482 to 793 (ETVLNSALLR…SFKNMYRNPK (312 aa)) the chain is Lumenal. Phosphoserine occurs at positions 659 and 702. In terms of domain architecture, ABC transmembrane type-2 spans 793 to 1044 (KLLLGNYLLT…IMGYLALKWI (252 aa)). A helical membrane pass occupies residues 794 to 814 (LLLGNYLLTILLSLFLGTLYY). Residues 815 to 828 (NVSNDISGFQNRMG) are Cytoplasmic-facing. Residues 829 to 849 (LFFFILTYFGFVTFTGLSSFA) form a helical membrane-spanning segment. The Lumenal segment spans residues 850-877 (LERIIFIKERSNNYYSPLAYYISKIMSE). Residues 878–898 (VVPLRVVPPILLSLIVYPMTG) traverse the membrane as a helical segment. Over 899-909 (LNMKDNAFFKC) the chain is Cytoplasmic. Residues 910 to 930 (IGILILFNLGISLEILTIGII) form a helical membrane-spanning segment. The Lumenal portion of the chain corresponds to 931–937 (FEDLNNS). An N-linked (GlcNAc...) asparagine glycan is attached at asparagine 935. A helical transmembrane segment spans residues 938-958 (IILSVLVLLGSLLFSGLFINT). The Cytoplasmic portion of the chain corresponds to 959–1000 (KNITNVAFKYLKNFSVFYYAYESLLINEVKTLMLKERKYGLN). A helical membrane pass occupies residues 1001–1021 (IEVPGATILSTFGFVVQNLVF). The Lumenal portion of the chain corresponds to 1022–1024 (DIK). A helical transmembrane segment spans residues 1025–1045 (ILALFNVVFLIMGYLALKWIV). At 1046-1049 (VEQK) the chain is on the cytoplasmic side.

This sequence belongs to the ABC transporter superfamily. ABCG family. Eye pigment precursor importer (TC 3.A.1.204) subfamily.

The protein resides in the endoplasmic reticulum membrane. This Saccharomyces cerevisiae (strain ATCC 204508 / S288c) (Baker's yeast) protein is Probable ATP-dependent permease (ADP1).